We begin with the raw amino-acid sequence, 86 residues long: uncharacterized protein (86 aa).

Residues 63–85 form a helical membrane-spanning segment; it reads VGGRSPSIQNSFFFFFFFFFFFF.

It is found in the membrane. This is an uncharacterized protein from Dictyostelium discoideum (Social amoeba).